The following is a 1118-amino-acid chain: Constitutive coactivator of PPAR-gamma-like protein 1 (1118 aa).

The segment at 339–405 is interaction with YES1, SRC and FYN; sequence PPHYLAARPG…SLSEPAPLTL (67 aa). Residues 374-533 are disordered; sequence AKPVAPQVPS…GTVQPIPCLL (160 aa). Low complexity predominate over residues 376 to 396; the sequence is PVAPQVPSPGGAPGQGPYPYS. Composition is skewed to polar residues over residues 405–420 and 435–447; these read LDTS…SYSN and SPIN…SPNH. Positions 481–502 are enriched in basic and acidic residues; sequence GWEKTGSHSEPQARGDPGDQTK. A compositionally biased stretch (polar residues) spans 503–514; the sequence is AEGSSTASSGSQ. Thr655 carries the phosphothreonine modification. The RNA binding stretch occupies residues 829 to 1118; that stretch reads ADQAAKVEKM…LEAAVLNKEE (290 aa). Arg873, Arg884, and Arg886 each carry omega-N-methylarginine. A disordered region spans residues 921–945; the sequence is AFSGSDSSRTSKSQGGVQPIPSQGG. Polar residues predominate over residues 924–936; it reads GSDSSRTSKSQGG. Residue Lys932 is modified to N6-acetyllysine. Ser960 is modified (phosphoserine). An omega-N-methylarginine mark is found at Arg982 and Arg986. At Ser1023 the chain carries Phosphoserine. The disordered stretch occupies residues 1025-1102; it reads EEVAKELKSK…HLNALSTDSA (78 aa). Residues 1026-1037 show a composition bias toward basic and acidic residues; sequence EVAKELKSKSGE. A compositionally biased stretch (low complexity) spans 1038-1051; that stretch reads SKSSAMSSDGSLAE. Phosphoserine occurs at positions 1044, 1045, and 1048. The span at 1076 to 1101 shows a compositional bias: polar residues; that stretch reads HSESALNNDSKTCNTNPHLNALSTDS.

It belongs to the constitutive coactivator of PPAR-gamma family. In terms of assembly, interacts with PURA. Interacts with SRC family protein kinases YES1, SRC and FYN. Upon tyrosine phosphorylation, interacts with PIK3R1. Interacts with IGF2BP1/IMP-1 in an RNA-dependent manner. Post-translationally, arg-982 is dimethylated, probably to asymmetric dimethylarginine. Phosphorylated on tyrosine by SRC family protein kinases upon oxidative stress, for instance following UV irradiation. As to expression, widely expressed. In gastric mucosa, detected in the bottom region of the foveolar epithelium (at protein level).

It is found in the cytoplasm. Its subcellular location is the cell membrane. Its function is as follows. Component of the oxidative stress-induced survival signaling. May regulate the activation of SRC family protein kinases. May act as a scaffolding protein enabling SRC family protein kinases to phosphorylate and activate PI3-kinase. Binds IGF2 RNA and promotes the production of IGF2 protein. The protein is Constitutive coactivator of PPAR-gamma-like protein 1 (FAM120A) of Homo sapiens (Human).